Consider the following 350-residue polypeptide: Pleckstrin (350 aa).

Residues 4–101 (KRIREGYLVK…WVRDIKKAIK (98 aa)) enclose the PH 1 domain. Lysine 64 carries the N6-acetyllysine modification. Residues serine 113 and serine 117 each carry the phosphoserine modification. In terms of domain architecture, DEP spans 136–221 (PEKGIKELNL…SPDAFYYFPD (86 aa)). A PH 2 domain is found at 244 to 347 (VIIKQGCLLK…WIKAIQVASR (104 aa)).

Functionally, major protein kinase C substrate of platelets. The chain is Pleckstrin (Plek) from Mus musculus (Mouse).